The primary structure comprises 209 residues: Octanoyltransferase (209 aa).

The region spanning 28-203 is the BPL/LPL catalytic domain; that stretch reads NATPETLLLL…RFQGLLDEWL (176 aa). Substrate-binding positions include 66–73, 133–135, and 146–148; these read RGGDVTFH, AIG, and GFA. Catalysis depends on C164, which acts as the Acyl-thioester intermediate.

The protein belongs to the LipB family.

It localises to the cytoplasm. The catalysed reaction is octanoyl-[ACP] + L-lysyl-[protein] = N(6)-octanoyl-L-lysyl-[protein] + holo-[ACP] + H(+). The protein operates within protein modification; protein lipoylation via endogenous pathway; protein N(6)-(lipoyl)lysine from octanoyl-[acyl-carrier-protein]: step 1/2. Functionally, catalyzes the transfer of endogenously produced octanoic acid from octanoyl-acyl-carrier-protein onto the lipoyl domains of lipoate-dependent enzymes. Lipoyl-ACP can also act as a substrate although octanoyl-ACP is likely to be the physiological substrate. The polypeptide is Octanoyltransferase (Pelobacter propionicus (strain DSM 2379 / NBRC 103807 / OttBd1)).